The chain runs to 250 residues: 2,3-bisphosphoglycerate-dependent phosphoglycerate mutase (250 aa).

Substrate-binding positions include 10–17 (RHGESQWN), 23–24 (TG), arginine 62, 89–92 (ERHY), lysine 100, 116–117 (RR), and 185–186 (GN). The active-site Tele-phosphohistidine intermediate is the histidine 11. Glutamate 89 functions as the Proton donor/acceptor in the catalytic mechanism.

Belongs to the phosphoglycerate mutase family. BPG-dependent PGAM subfamily. As to quaternary structure, homodimer.

The catalysed reaction is (2R)-2-phosphoglycerate = (2R)-3-phosphoglycerate. Its pathway is carbohydrate degradation; glycolysis; pyruvate from D-glyceraldehyde 3-phosphate: step 3/5. In terms of biological role, catalyzes the interconversion of 2-phosphoglycerate and 3-phosphoglycerate. This is 2,3-bisphosphoglycerate-dependent phosphoglycerate mutase from Shigella boydii serotype 4 (strain Sb227).